Here is a 131-residue protein sequence, read N- to C-terminus: Large ribosomal subunit protein bL12 (131 aa).

This sequence belongs to the bacterial ribosomal protein bL12 family. As to quaternary structure, homodimer. Part of the ribosomal stalk of the 50S ribosomal subunit. Forms a multimeric L10(L12)X complex, where L10 forms an elongated spine to which 2 to 4 L12 dimers bind in a sequential fashion. Binds GTP-bound translation factors.

Functionally, forms part of the ribosomal stalk which helps the ribosome interact with GTP-bound translation factors. Is thus essential for accurate translation. In Prochlorococcus marinus (strain MIT 9301), this protein is Large ribosomal subunit protein bL12.